A 119-amino-acid chain; its full sequence is Large ribosomal subunit protein bL20 (119 aa).

Belongs to the bacterial ribosomal protein bL20 family.

Its function is as follows. Binds directly to 23S ribosomal RNA and is necessary for the in vitro assembly process of the 50S ribosomal subunit. It is not involved in the protein synthesizing functions of that subunit. This Delftia acidovorans (strain DSM 14801 / SPH-1) protein is Large ribosomal subunit protein bL20.